The primary structure comprises 214 residues: Putative ankyrin repeat protein RF_1081 (214 aa).

Over residues 1 to 14 (MRKQQIPTLSTSAL) the composition is skewed to polar residues. The disordered stretch occupies residues 1 to 32 (MRKQQIPTLSTSALDKSPGPGSPDSDIEMKST). One copy of the ANK repeat lies at 67 to 135 (NPNALLHEAA…EEPILVTKKD (69 aa)).

The sequence is that of Putative ankyrin repeat protein RF_1081 from Rickettsia felis (strain ATCC VR-1525 / URRWXCal2) (Rickettsia azadi).